A 342-amino-acid polypeptide reads, in one-letter code: N-acetyl-gamma-glutamyl-phosphate reductase (342 aa).

The active site involves Cys147.

Belongs to the NAGSA dehydrogenase family. Type 1 subfamily.

It is found in the cytoplasm. The catalysed reaction is N-acetyl-L-glutamate 5-semialdehyde + phosphate + NADP(+) = N-acetyl-L-glutamyl 5-phosphate + NADPH + H(+). The protein operates within amino-acid biosynthesis; L-arginine biosynthesis; N(2)-acetyl-L-ornithine from L-glutamate: step 3/4. Functionally, catalyzes the NADPH-dependent reduction of N-acetyl-5-glutamyl phosphate to yield N-acetyl-L-glutamate 5-semialdehyde. This chain is N-acetyl-gamma-glutamyl-phosphate reductase, found in Methanosphaera stadtmanae (strain ATCC 43021 / DSM 3091 / JCM 11832 / MCB-3).